Consider the following 166-residue polypeptide: Alanine racemase (166 aa).

The Proton acceptor; specific for L-alanine role is filled by Tyr-62. Substrate is bound at residue Met-110.

The protein belongs to the alanine racemase family. Pyridoxal 5'-phosphate is required as a cofactor.

The enzyme catalyses L-alanine = D-alanine. It functions in the pathway amino-acid biosynthesis; D-alanine biosynthesis; D-alanine from L-alanine: step 1/1. In terms of biological role, catalyzes the interconversion of L-alanine and D-alanine. May also act on other amino acids. The sequence is that of Alanine racemase (alr) from Piscirickettsia salmonis.